The chain runs to 145 residues: Neuropeptide-like protein 68 (145 aa).

An N-terminal signal peptide occupies residues 1-15 (MLLVLLFSLFSVGFG). The disordered stretch occupies residues 41–65 (SSSSEDDTPDFPSLRDKRGVDPMSI).

It localises to the secreted. The sequence is that of Neuropeptide-like protein 68 from Caenorhabditis elegans.